We begin with the raw amino-acid sequence, 216 residues long: Large ribosomal subunit protein uL1 (216 aa).

This sequence belongs to the universal ribosomal protein uL1 family. In terms of assembly, component of the large ribosomal subunit.

The protein localises to the cytoplasm. Its function is as follows. Component of the large ribosomal subunit. The ribosome is a large ribonucleoprotein complex responsible for the synthesis of proteins in the cell. This Ictalurus punctatus (Channel catfish) protein is Large ribosomal subunit protein uL1 (rpl10a).